Consider the following 535-residue polypeptide: 3-hydroxyindolin-2-one monooxygenase (535 aa).

2 helical membrane passes run 14–34 (VVQC…LLAI) and 469–489 (ICAG…NLIY). A heme-binding site is contributed by cysteine 470.

It belongs to the cytochrome P450 family. Heme is required as a cofactor.

The protein localises to the membrane. The enzyme catalyses 3-hydroxyindolin-2-one + reduced [NADPH--hemoprotein reductase] + O2 = 2-hydroxy-2H-1,4-benzoxazin-3(4H)-one + oxidized [NADPH--hemoprotein reductase] + H2O + H(+). It participates in secondary metabolite biosynthesis; 2,4-dihydroxy-1,4-benzoxazin-3-one biosynthesis; 2,4-dihydroxy-1,4-benzoxazin-3-one from indoleglycerol phosphate: step 4/5. Functionally, catalyzes the conversion of 3-hydroxyindolin-2-one to 2-hydroxy-1,4-benzoxazin-3-one (HBOA). This Zea mays (Maize) protein is 3-hydroxyindolin-2-one monooxygenase (CYP71C1).